A 524-amino-acid chain; its full sequence is Serine/threonine-protein phosphatase 2A 56 kDa regulatory subunit gamma isoform (524 aa).

Met1 is subject to N-acetylmethionine. The segment at 476–508 (SDEARQAQKELKKDRPLVRRKSELPQDPHTEKA) is disordered.

This sequence belongs to the phosphatase 2A regulatory subunit B56 family. In terms of assembly, PP2A consists of a common heterodimeric core enzyme, composed of PPP2CA a 36 kDa catalytic subunit (subunit C) and PPP2R1A a 65 kDa constant regulatory subunit (PR65 or subunit A), that associates with a variety of regulatory subunits. Proteins that associate with the core dimer include three families of regulatory subunits B (the R2/B/PR55/B55, R3/B''/PR72/PR130/PR59 and R5/B'/B56 families), the 48 kDa variable regulatory subunit, viral proteins, and cell signaling molecules. Interacts with SGO1. Interacts with SGO1; the interaction is direct. May interact with TP53. Interacts with IER3 and/or ERK kinases; regulates ERK dephosphorylation. Interacts with CIP2A; this interaction stabilizes CIP2A. In terms of tissue distribution, highest levels in heart, liver and brain. Lower levels in skeletal muscle, spleen, kidney and lung. Isoform 4 is testis-specific.

The protein localises to the nucleus. Its subcellular location is the chromosome. It localises to the centromere. In terms of biological role, the B regulatory subunit might modulate substrate selectivity and catalytic activity, and might also direct the localization of the catalytic enzyme to a particular subcellular compartment. The PP2A-PPP2R5C holoenzyme may activate TP53 and play a role in DNA damage-induced inhibition of cell proliferation. PP2A-PPP2R5C may also regulate the ERK signaling pathway through ERK dephosphorylation. This is Serine/threonine-protein phosphatase 2A 56 kDa regulatory subunit gamma isoform (Ppp2r5c) from Mus musculus (Mouse).